The following is a 278-amino-acid chain: Manganese import system permease protein ScaB (278 aa).

8 consecutive transmembrane segments (helical) span residues 18–38 (ALIT…FIIL), 40–60 (GMSL…ALSF), 61–81 (ILGI…SILI), 136–156 (VTIG…RPLL), 172–192 (VKLY…TAMQ), 194–214 (VGTI…YLYA), 220–240 (MMLL…FIGY), and 244–264 (IAVG…SFFI).

It belongs to the ABC-3 integral membrane protein family.

It is found in the cell membrane. Functionally, part of an ABC transporter complex involved in manganese import. The chain is Manganese import system permease protein ScaB from Streptococcus pneumoniae.